We begin with the raw amino-acid sequence, 392 residues long: Sterol methyltransferase-like 3 (392 aa).

A helical transmembrane segment spans residues 20-42 (VTPWQAAAGVTAAIFIGSYLWHS).

Belongs to the class I-like SAM-binding methyltransferase superfamily. Erg6/SMT family.

Its subcellular location is the microsome membrane. Functionally, unable to convert squalene, botryococcene, cycloartenol, zymosterol or lanosterol to mono-, di-, tri- or tetramethylated derivatives. The protein is Sterol methyltransferase-like 3 (SMT-3) of Botryococcus braunii (Green alga).